The chain runs to 365 residues: Protein-glutamate methylesterase/protein-glutamine glutaminase 2 (365 aa).

A Response regulatory domain is found at 6-123; sequence RVLIIDDSAS…ADSLSDDAMR (118 aa). 4-aspartylphosphate is present on Asp-57. Residues 173-359 enclose the CheB-type methylesterase domain; it reads AKTTEMVVCV…PLDQIAREVL (187 aa). Active-site residues include Ser-185, His-211, and Asp-307.

Belongs to the CheB family. Phosphorylated by CheA. Phosphorylation of the N-terminal regulatory domain activates the methylesterase activity.

Its subcellular location is the cytoplasm. It carries out the reaction [protein]-L-glutamate 5-O-methyl ester + H2O = L-glutamyl-[protein] + methanol + H(+). The enzyme catalyses L-glutaminyl-[protein] + H2O = L-glutamyl-[protein] + NH4(+). Involved in chemotaxis. Part of a chemotaxis signal transduction system that modulates chemotaxis in response to various stimuli. Catalyzes the demethylation of specific methylglutamate residues introduced into the chemoreceptors (methyl-accepting chemotaxis proteins or MCP) by CheR. Also mediates the irreversible deamidation of specific glutamine residues to glutamic acid. This is Protein-glutamate methylesterase/protein-glutamine glutaminase 2 from Rhizobium johnstonii (strain DSM 114642 / LMG 32736 / 3841) (Rhizobium leguminosarum bv. viciae).